Consider the following 174-residue polypeptide: Cell division protein FtsL (174 aa).

Residues 1–38 (MLAAPRELSYIPQPVVSSKQSPRSGLSNRRRESRARQK) are Cytoplasmic-facing. Residues 39–59 (ILLLGLVLMGFVIGLSLTFLT) form a helical membrane-spanning segment. At 60–174 (MQVLIKGYKI…EPARQAGAGV (115 aa)) the chain is on the extracellular side.

This sequence belongs to the FtsL family.

It localises to the cell membrane. Its function is as follows. Essential cell division protein. This chain is Cell division protein FtsL, found in Moorella thermoacetica (strain ATCC 39073 / JCM 9320).